A 302-amino-acid chain; its full sequence is Acetylglutamate kinase (302 aa).

Substrate is bound by residues 67 to 68 (GG), Arg-89, and Asn-194.

It belongs to the acetylglutamate kinase family. ArgB subfamily.

It localises to the cytoplasm. It carries out the reaction N-acetyl-L-glutamate + ATP = N-acetyl-L-glutamyl 5-phosphate + ADP. Its pathway is amino-acid biosynthesis; L-arginine biosynthesis; N(2)-acetyl-L-ornithine from L-glutamate: step 2/4. Catalyzes the ATP-dependent phosphorylation of N-acetyl-L-glutamate. The sequence is that of Acetylglutamate kinase from Hahella chejuensis (strain KCTC 2396).